Reading from the N-terminus, the 281-residue chain is 39kDa core protein OPG130 (281 aa).

A compositionally biased stretch (polar residues) spans 1–22 (MDFFNKFSQGLAESSTPKSSIY). Disordered regions lie at residues 1–33 (MDFF…DTKK), 91–112 (ILLP…TSSD), and 149–192 (NKDQ…PQPP). The span at 24–33 (SEEKDPDTKK) shows a compositional bias: basic and acidic residues. The segment covering 94-112 (PSSTAPTPKPRQQTNTSSD) has biased composition (polar residues). The span at 154–175 (TTTPPSTQPSQTLPTTTCTQQS) shows a compositional bias: low complexity.

This sequence belongs to the orthopoxvirus OPG130 family. As to quaternary structure, interacts with OPG136 and its cleaved form. Post-translationally, its phosphorylation state is regulated by the OPG054 kinase and the OPG106 phosphatase.

It is found in the virion. It localises to the host endoplasmic reticulum-Golgi intermediate compartment membrane. Functionally, component of the virion core. Participates in virion assembly. The chain is 39kDa core protein OPG130 (OPG130) from Vaccinia virus (strain Copenhagen) (VACV).